Here is a 425-residue protein sequence, read N- to C-terminus: Serine hydroxymethyltransferase (425 aa).

Residues Leu-128 and Gly-132 to Leu-134 contribute to the (6S)-5,6,7,8-tetrahydrofolate site. Lys-237 carries the N6-(pyridoxal phosphate)lysine modification.

This sequence belongs to the SHMT family. As to quaternary structure, homodimer. The cofactor is pyridoxal 5'-phosphate.

Its subcellular location is the cytoplasm. The enzyme catalyses (6R)-5,10-methylene-5,6,7,8-tetrahydrofolate + glycine + H2O = (6S)-5,6,7,8-tetrahydrofolate + L-serine. It functions in the pathway one-carbon metabolism; tetrahydrofolate interconversion. Its pathway is amino-acid biosynthesis; glycine biosynthesis; glycine from L-serine: step 1/1. Its function is as follows. Catalyzes the reversible interconversion of serine and glycine with tetrahydrofolate (THF) serving as the one-carbon carrier. This reaction serves as the major source of one-carbon groups required for the biosynthesis of purines, thymidylate, methionine, and other important biomolecules. Also exhibits THF-independent aldolase activity toward beta-hydroxyamino acids, producing glycine and aldehydes, via a retro-aldol mechanism. The polypeptide is Serine hydroxymethyltransferase (Wolbachia sp. subsp. Drosophila simulans (strain wRi)).